Here is a 411-residue protein sequence, read N- to C-terminus: LL-diaminopimelate aminotransferase (411 aa).

Substrate-binding residues include Tyr-15 and Gly-42. Residues Tyr-72, 105 to 106 (SK), Tyr-129, Asn-186, Tyr-217, and 245 to 247 (SFS) each bind pyridoxal 5'-phosphate. Substrate is bound by residues Lys-106, Tyr-129, and Asn-186. An N6-(pyridoxal phosphate)lysine modification is found at Lys-248. Positions 256 and 287 each coordinate pyridoxal 5'-phosphate. Residues Asn-287 and Arg-382 each coordinate substrate.

The protein belongs to the class-I pyridoxal-phosphate-dependent aminotransferase family. LL-diaminopimelate aminotransferase subfamily. In terms of assembly, homodimer. The cofactor is pyridoxal 5'-phosphate.

The catalysed reaction is (2S,6S)-2,6-diaminopimelate + 2-oxoglutarate = (S)-2,3,4,5-tetrahydrodipicolinate + L-glutamate + H2O + H(+). It participates in amino-acid biosynthesis; L-lysine biosynthesis via DAP pathway; LL-2,6-diaminopimelate from (S)-tetrahydrodipicolinate (aminotransferase route): step 1/1. In terms of biological role, involved in the synthesis of meso-diaminopimelate (m-DAP or DL-DAP), required for both lysine and peptidoglycan biosynthesis. Catalyzes the direct conversion of tetrahydrodipicolinate to LL-diaminopimelate. Is also able to use meso-diaminopimelate, lysine or ornithine as substrates. The sequence is that of LL-diaminopimelate aminotransferase from Protochlamydia amoebophila (strain UWE25).